Here is a 307-residue protein sequence, read N- to C-terminus: Taste receptor type 2 member 41 (307 aa).

Residues 1-7 (MQAALMA) lie on the Extracellular side of the membrane. Residues 8–28 (FFMLLFSLLSLLGIAANGFIV) traverse the membrane as a helical segment. Residues 29-40 (LVLGREWLRYGR) are Cytoplasmic-facing. A helical membrane pass occupies residues 41 to 61 (LLPLDMILISLGASRXCLQLV). Residues 62-88 (GTVHNFYYSARKVEYSGGLGRQFFHLH) lie on the Extracellular side of the membrane. Residues 89-109 (WHFLNSATFWFCSWLSVLFCV) form a helical membrane-spanning segment. Residues 110-129 (KIANITHPTFLWLKWRFPGW) lie on the Cytoplasmic side of the membrane. The helical transmembrane segment at 130–150 (VPWLLLGSVLISFIITLLFFW) threads the bilayer. At 151–183 (VNYPVYQELLIRKFSGNMTYKWNTRIETYYFPS) the chain is on the extracellular side. Asn167 carries N-linked (GlcNAc...) asparagine glycosylation. Residues 184-204 (LKLVIWSIPFSVFLVSIMLLI) traverse the membrane as a helical segment. At 205-234 (NSLRRHTQRMQHNGHSLQDPSTQAHTRALK) the chain is on the cytoplasmic side. The chain crosses the membrane as a helical span at residues 235-255 (SLISFLFLYALSFLSLIIDAT). Residues 256–264 (KFISMQNDF) are Extracellular-facing. A helical membrane pass occupies residues 265–285 (YWPWQIAVYLCISVHPFILIF). The Cytoplasmic segment spans residues 286–307 (SNLKLRSMFWQVLLLARGFWVA).

The protein belongs to the G-protein coupled receptor T2R family.

Its subcellular location is the membrane. Its function is as follows. Receptor that may play a role in the perception of bitterness and is gustducin-linked. May play a role in sensing the chemical composition of the gastrointestinal content. The activity of this receptor may stimulate alpha gustducin, mediate PLC-beta-2 activation and lead to the gating of TRPM5. The chain is Taste receptor type 2 member 41 (TAS2R41) from Gorilla gorilla gorilla (Western lowland gorilla).